A 420-amino-acid chain; its full sequence is uncharacterized protein (420 aa).

6 consecutive transmembrane segments (helical) span residues 26–46, 66–86, 231–251, 276–296, 317–337, and 369–389; these read IFLL…QSVI, SAIK…WFTF, VILA…ATVL, IPVN…PSLL, GFLV…SIAF, and IDIL…FLTI.

It belongs to the CbiQ family.

Its subcellular location is the cell membrane. This is an uncharacterized protein from Mycoplasma genitalium (strain ATCC 33530 / DSM 19775 / NCTC 10195 / G37) (Mycoplasmoides genitalium).